A 200-amino-acid polypeptide reads, in one-letter code: Pyridoxal 5'-phosphate synthase subunit PdxT (200 aa).

An L-glutamine-binding site is contributed by 52 to 54 (GES). Cys-84 (nucleophile) is an active-site residue. Residues Arg-116 and 145–146 (IR) contribute to the L-glutamine site. Catalysis depends on charge relay system residues His-181 and Glu-183.

The protein belongs to the glutaminase PdxT/SNO family. As to quaternary structure, in the presence of PdxS, forms a dodecamer of heterodimers. Only shows activity in the heterodimer.

It carries out the reaction aldehydo-D-ribose 5-phosphate + D-glyceraldehyde 3-phosphate + L-glutamine = pyridoxal 5'-phosphate + L-glutamate + phosphate + 3 H2O + H(+). The catalysed reaction is L-glutamine + H2O = L-glutamate + NH4(+). It participates in cofactor biosynthesis; pyridoxal 5'-phosphate biosynthesis. Catalyzes the hydrolysis of glutamine to glutamate and ammonia as part of the biosynthesis of pyridoxal 5'-phosphate. The resulting ammonia molecule is channeled to the active site of PdxS. This Saccharolobus solfataricus (strain ATCC 35092 / DSM 1617 / JCM 11322 / P2) (Sulfolobus solfataricus) protein is Pyridoxal 5'-phosphate synthase subunit PdxT.